The primary structure comprises 289 residues: Oxaloacetate decarboxylase (289 aa).

Residue Ser-50 participates in substrate binding. Mg(2+) is bound at residue Asp-88. 2 residues coordinate substrate: Arg-159 and His-235.

Belongs to the isocitrate lyase/PEP mutase superfamily. Oxaloacetate decarboxylase family. Homotetramer; dimer of dimers. Mg(2+) serves as cofactor.

The enzyme catalyses oxaloacetate + H(+) = pyruvate + CO2. Functionally, catalyzes the decarboxylation of oxaloacetate into pyruvate. Seems to play a role in maintaining cellular concentrations of bicarbonate and pyruvate. In Pseudomonas savastanoi pv. phaseolicola (strain 1448A / Race 6) (Pseudomonas syringae pv. phaseolicola (strain 1448A / Race 6)), this protein is Oxaloacetate decarboxylase.